We begin with the raw amino-acid sequence, 211 residues long: Peptidyl-prolyl cis-trans isomerase FKBP14 (211 aa).

Residues 1 to 19 (MRLFLWNAVLTLFVTSLIG) form the signal peptide. Cysteines 38 and 96 form a disulfide. A PPIase FKBP-type domain is found at 45–135 (GDLMLVHYEG…IFNIDLLEIR (91 aa)). One can recognise an EF-hand 1 domain in the interval 135–170 (RNGPRSHESFQEMDLNDDWKLSKDEVKAYLKKEFEK). Ca(2+) is bound by residues Asp-148, Asn-150, Asp-152, Lys-154, and Glu-159. A glycan (N-linked (GlcNAc...) asparagine) is linked at Asn-176. The region spanning 179-211 (HHDALVEDIFDKEDEDKDGFISAREFTYKHDEL) is the EF-hand 2 domain. Positions 192, 194, 196, 198, and 203 each coordinate Ca(2+). The Prevents secretion from ER signature appears at 208-211 (HDEL).

In terms of assembly, monomer. Homodimer. Interacts with type III, type IV and type X collagens.

It localises to the endoplasmic reticulum lumen. The enzyme catalyses [protein]-peptidylproline (omega=180) = [protein]-peptidylproline (omega=0). Inhibited by tacrolimus/FK506. Functionally, PPIase which accelerates the folding of proteins during protein synthesis. Has a preference for substrates containing 4-hydroxylproline modifications, including type III collagen. May also target type VI and type X collagens. In Homo sapiens (Human), this protein is Peptidyl-prolyl cis-trans isomerase FKBP14 (FKBP14).